A 1104-amino-acid chain; its full sequence is MLRGQTLRWRAALQTPRSLILRPLFAPGGYNVGPRSVLETSRRFRSLPPSLRTFSSSTARRKEKPPPGDEKEDSNKKENKDNDDGTEDKEVERDPRRKQADSSGKHGSSVDPGAPTSGFARRREKAADRDQRSVTEDAKREAEAKGNSSDTPSAIPVSDSSSESKPSGSHNGGDDGGKKGKKNDKALQKPSVPDVYPQVMAIPIAKRPLFPGFYKAITIRDPNVATAIQEMMKRGQPYVGAFLFKDENADGDVIESTDDVYDTGVFAQVTAAYPLRGEQSGVTAVLYPHRRIKISSLIPPGDSTKSGNSEDKTTEKRGDVVASFEENAAELVTKDHYEPTSFLRKYPVSLVNVENLTEEPFDKKSAIIRAVTSEIVNVCKEIATLNPLFRDQISAFYTDQFPGNLSDEPAKLADFAAAVSGGELHELQEVLESMNIEERLPKGLVVLKKELMNAQLQTKISKDVEAKIQKRQREYWLMEQMKGIKRELGIESDGKDKLVEKFKEKAEKLAMPEAVKKVFDEELNKLAHLEPAASEFNVTRNYLDWLTQIPWGQKSVENFGISHATDVLNEDHYGLKDVKDRILEFIAVGKLRGTVEGKILCLVGPPGVGKTSIGKSIARALNRQYYRFSVGGLTDVAEIKGHRRTYVGALPGRIIQALKKCQTENPLILIDEVDKIGRGHQGDPSSALLELLDPEQNSSFLDHYMDVPVDLSKVLFVCTANVTDTIPRPLLDRMELIELSGYVADEKMAIAQKYLAPAARELTGLKNVDVTLTEEAIEELIKSYCRESGVRNLKKQIEKVYRKAAFKIVSDLGEDVLAEDKALTAEGKAAQEESEKETGPIESTSEQEKATTENPRVALNVPDSVHLSIGKDSLTDYVGPPIFTTDRLYDTFPPGVTMGLAWTSMGGAALYVESILENALTPESQPGLDITGNLQNVMKESTQIAYSFVKSVMAKQFPENRFFEKAKLHMHCPEGAVPKDGPSAGITMATSLLSLALNHPLDPTIAMTGELTVTGKVLRIGGLREKTVAARRAGAKTIIFPADNMSDWLELPENIKSGIEGHAVSWYSEVFDILFADLDKQAANRVWQKQLSKEPKKSNDKDDH.

The transit peptide at 1 to 54 (MLRGQTLRWRAALQTPRSLILRPLFAPGGYNVGPRSVLETSRRFRSLPPSLRTF) directs the protein to the mitochondrion. 2 disordered regions span residues 41 to 192 (SRRF…KPSV) and 296 to 317 (SLIP…TEKR). Composition is skewed to basic and acidic residues over residues 64 to 104 (KPPP…DSSG) and 125 to 144 (KAAD…EAEA). Low complexity predominate over residues 158 to 169 (SDSSSESKPSGS). Composition is skewed to basic and acidic residues over residues 172 to 187 (GGDD…DKAL) and 308 to 317 (NSEDKTTEKR). A Lon N-terminal domain is found at 199-451 (VMAIPIAKRP…KGLVVLKKEL (253 aa)). 604–611 (GPPGVGKT) lines the ATP pocket. A compositionally biased stretch (basic and acidic residues) spans 825 to 839 (AEGKAAQEESEKETG). The tract at residues 825 to 857 (AEGKAAQEESEKETGPIESTSEQEKATTENPRV) is disordered. The 187-residue stretch at 891-1077 (TFPPGVTMGL…SEVFDILFAD (187 aa)) folds into the Lon proteolytic domain. Residues serine 983 and lysine 1026 contribute to the active site.

It belongs to the peptidase S16 family. Homohexamer or homoheptamer. Organized in a ring with a central cavity.

The protein localises to the mitochondrion matrix. The enzyme catalyses Hydrolysis of proteins in presence of ATP.. ATP-dependent serine protease that mediates the selective degradation of misfolded, unassembled or oxidatively damaged polypeptides as well as certain short-lived regulatory proteins in the mitochondrial matrix. May also have a chaperone function in the assembly of inner membrane protein complexes. Participates in the regulation of mitochondrial gene expression and in the maintenance of the integrity of the mitochondrial genome. Binds to mitochondrial DNA in a site-specific manner. In Emericella nidulans (strain FGSC A4 / ATCC 38163 / CBS 112.46 / NRRL 194 / M139) (Aspergillus nidulans), this protein is Lon protease homolog, mitochondrial (pim1).